The following is a 175-amino-acid chain: Alpha-crystallin B chain (175 aa).

Methionine 1 bears the N-acetylmethionine mark. The residue at position 19 (serine 19) is a Phosphoserine. Serine 41 carries an O-linked (GlcNAc) serine glycan. A phosphoserine mark is found at serine 45 and serine 59. One can recognise a sHSP domain in the interval 56-164; it reads RAPSWFDTGL…PERTIPITRE (109 aa). Position 83 (histidine 83) interacts with Zn(2+). Lysine 92 carries the N6-acetyllysine modification. 4 residues coordinate Zn(2+): histidine 104, glutamate 106, histidine 111, and histidine 119. The tract at residues 142 to 175 is disordered; it reads VLTVNGPRKQVSGPERTIPITREEKPAVTAAPKK. An N6-acetyllysine modification is found at lysine 166. An O-linked (GlcNAc) threonine glycan is attached at threonine 170.

The protein belongs to the small heat shock protein (HSP20) family. Heteromer composed of three CRYAA and one CRYAB subunits. Aggregates with homologous proteins, including the small heat shock protein HSPB1, to form large heteromeric complexes. Inter-subunit bridging via zinc ions enhances stability, which is crucial as there is no protein turn over in the lens. Interacts with HSPBAP1 and TTN/titin. Interacts with TMEM109; in the cellular response to DNA damage. Interacts with DES; binds rapidly during early stages of DES filament assembly and a reduced binding seen in the later stages. Interacts with TMED10; the interaction mediates the translocation from the cytoplasm into the ERGIC (endoplasmic reticulum-Golgi intermediate compartment) and thereby secretion. Interacts with ATP6V1A and with MTOR, forming a ternary complex.

It is found in the cytoplasm. The protein resides in the nucleus. Its subcellular location is the secreted. The protein localises to the lysosome. In terms of biological role, may contribute to the transparency and refractive index of the lens. Has chaperone-like activity, preventing aggregation of various proteins under a wide range of stress conditions. In lens epithelial cells, stabilizes the ATP6V1A protein, preventing its degradation by the proteasome. This is Alpha-crystallin B chain (CRYAB) from Macaca fascicularis (Crab-eating macaque).